Consider the following 536-residue polypeptide: Phosphoenolpyruvate carboxykinase (ATP) (536 aa).

Residues Arg-62, Tyr-203, and Lys-209 each contribute to the substrate site. Residues Lys-209, His-228, and 244-252 (GLSGTGKTT) each bind ATP. Mn(2+)-binding residues include Lys-209 and His-228. Residue Asp-265 coordinates Mn(2+). ATP-binding positions include Glu-293, Arg-329, 445 to 446 (RI), and Thr-451. Arg-329 lines the substrate pocket.

This sequence belongs to the phosphoenolpyruvate carboxykinase (ATP) family. As to quaternary structure, monomer. Requires Mn(2+) as cofactor.

It localises to the cytoplasm. The enzyme catalyses oxaloacetate + ATP = phosphoenolpyruvate + ADP + CO2. It participates in carbohydrate biosynthesis; gluconeogenesis. Its function is as follows. Involved in the gluconeogenesis. Catalyzes the conversion of oxaloacetate (OAA) to phosphoenolpyruvate (PEP) through direct phosphoryl transfer between the nucleoside triphosphate and OAA. In Actinobacillus pleuropneumoniae serotype 7 (strain AP76), this protein is Phosphoenolpyruvate carboxykinase (ATP).